A 144-amino-acid chain; its full sequence is F420-non-reducing hydrogenase vhc iron-sulfur subunit D (144 aa).

The protein belongs to the MvhD/VhuD family. The F420-non-reducing hydrogenase vhc is composed of three subunits; VhcA, VhcD and VhcG. It depends on [2Fe-2S] cluster as a cofactor.

The protein is F420-non-reducing hydrogenase vhc iron-sulfur subunit D (vhcD) of Methanococcus voltae.